The following is a 777-amino-acid chain: MGQKRQRDSKSSTFHAKKRKKAENATAPDSDDGWDGIVGADELNWKEVALPDHLEDAGGFFGLEEIEGVDIVRGSGNGEVKFKAVAGKPKKSILKKKAPEDENSEYDEEWSGFSDDDADRPENASSPAVEKPEKSDTKADKKSEKNADKKEAKDAKKKEAKAAKKEQKEKGSAIQHDTSINAGLSFAALQDTEEDDGADVSAWDSLGLSPEILTGLSKMKFASPTSVQEACIPQILEGHDVIGKASTGSGKTLAFGIPILEHYLEKKRDDISAEKEKKSEKDSTPIALILSPTRELAHQLSKHIGELIAQAPGVNARIALLTGGLSVQKQQRLLSGADIVIGTPGRVWEILSTGQGLIRKMQQIKFLVVDEADRLLSEGHFKEVEEILNALDRVEDGEVPGGENQASEEESDPSSERQTLVFSATFHRDLQQKLAGKGKWTGGDVMDKKESMDYLLQKLNFREEKPKFIDMNPISQMADNLKEGIVECGAMEKDLFLYTLLLYHPKHRTLVFTNSISAVRRLTKLLQTLQLPALALHSSMAQKARLRSVERFSSPSSDPSTILVATDVAARGLDIKGINLVIHYHAPRTADTYVHRSGRTARAGASGKSVIICGPDEMVGVVRLAAKVHANMANGKKLPLESLELDRRVVSRVKPRVSLASRITDANIAKEKISAEDNWLRNAAEDLGVEYDSEEFDESNGKGRGRGRGRHQKQKEVGSVSKAELAGLRAELKQLLSQRVNVGVSERYLTAGRVDIDALLRGEGNASFLGPVDPLHF.

Over residues 1–10 (MGQKRQRDSK) the composition is skewed to basic and acidic residues. 2 disordered regions span residues 1 to 36 (MGQKRQRDSKSSTFHAKKRKKAENATAPDSDDGWDG) and 86 to 177 (AGKP…IQHD). A compositionally biased stretch (acidic residues) spans 101–119 (DENSEYDEEWSGFSDDDAD). Residues 130 to 171 (EKPEKSDTKADKKSEKNADKKEAKDAKKKEAKAAKKEQKEKG) show a composition bias toward basic and acidic residues. Positions 201–229 (SAWDSLGLSPEILTGLSKMKFASPTSVQE) match the Q motif motif. A Helicase ATP-binding domain is found at 232-444 (IPQILEGHDV…AGKGKWTGGD (213 aa)). 245–252 (ASTGSGKT) contributes to the ATP binding site. Positions 370–373 (DEAD) match the DEAD box motif. The interval 393 to 417 (RVEDGEVPGGENQASEEESDPSSER) is disordered. The Helicase C-terminal domain occupies 496-646 (FLYTLLLYHP…KLPLESLELD (151 aa)). The segment at 692–720 (DSEEFDESNGKGRGRGRGRHQKQKEVGSV) is disordered. A compositionally biased stretch (basic residues) spans 703 to 713 (GRGRGRGRHQK).

Belongs to the DEAD box helicase family. DDX24/MAK5 subfamily.

It is found in the nucleus. It localises to the nucleolus. It carries out the reaction ATP + H2O = ADP + phosphate + H(+). In terms of biological role, ATP-binding RNA helicase involved in the biogenesis of 60S ribosomal subunits and is required for the normal formation of 25S and 5.8S rRNAs. In Neosartorya fischeri (strain ATCC 1020 / DSM 3700 / CBS 544.65 / FGSC A1164 / JCM 1740 / NRRL 181 / WB 181) (Aspergillus fischerianus), this protein is ATP-dependent RNA helicase mak5 (mak5).